We begin with the raw amino-acid sequence, 529 residues long: E3 ubiquitin-protein ligase arih1 (529 aa).

2 disordered regions span residues 1–29 (MDSDEGYNYEFDDEEECSEESGADEHEDE) and 46–69 (ERAGLCGEGGGSALGPGPGGEEDE). Residues 51–64 (CGEGGGSALGPGPG) show a composition bias toward gly residues. Residues 77-125 (TAEQILQHMVECIREVNEVIQNPATITRILLSHFNWDKEKLMERYFDGN) are UBA-like. The tract at residues 154-365 (LDMPCQICYL…SAWYNCNRYN (212 aa)) is TRIAD supradomain. Residues Cys158, Cys161, Cys175, His177, Cys180, Cys183, Cys203, Cys208, Cys248, Cys253, Cys269, Cys271, Cys276, Cys279, His284, Cys289, Cys316, and Cys319 each coordinate Zn(2+). The RING-type 1 zinc finger occupies 158 to 208 (CQICYLNYPNSYFTGLECGHKFCMQCWGEYLTTKIIEEGMGQTISCPAHGC). An IBR-type zinc finger spans residues 228-289 (LKYQHLITNS…GENWHDPVKC (62 aa)). Residues 316 to 347 (CPKCHVTIEKDGGCNHMVCRNQNCKAEFCWVC) form an RING-type 2; atypical zinc finger. Cys329 is an active-site residue. The Zn(2+) site is built by Cys334, Cys339, Cys344, Cys347, His354, and Cys361. The tract at residues 380–529 (RAALQRYLFY…EKDLWEYIED (150 aa)) is ariadne domain.

It belongs to the RBR family. Ariadne subfamily. As to quaternary structure, interacts (via the first RING-type zinc finger) with ube2l3. Associates with cullin-RING ubiquitin ligase (CRL) complexes containing neddylated cullin.

The protein resides in the cytoplasm. Its subcellular location is the nucleus. The catalysed reaction is [E2 ubiquitin-conjugating enzyme]-S-ubiquitinyl-L-cysteine + [acceptor protein]-L-lysine = [E2 ubiquitin-conjugating enzyme]-L-cysteine + [acceptor protein]-N(6)-ubiquitinyl-L-lysine.. The protein operates within protein modification; protein ubiquitination. Its activity is regulated as follows. Autoinhibited by the ariadne domain, which masks the second RING-type zinc finger that contains the active site and inhibits the E3 activity. Inhibition is relieved upon binding to neddylated cullin-RING ubiquitin ligase complexes, which activate the E3 ligase activity of ARIH1. Its function is as follows. E3 ubiquitin-protein ligase, which catalyzes ubiquitination of target proteins together with ubiquitin-conjugating enzyme E2 ube2l3. Acts as an atypical E3 ubiquitin-protein ligase by working together with cullin-RING ubiquitin ligase (CRL) complexes and initiating ubiquitination of CRL substrates: associates with CRL complexes and specifically mediates addition of the first ubiquitin on CRLs targets. The initial ubiquitin is then elongated. E3 ubiquitin-protein ligase activity is activated upon binding to neddylated cullin-RING ubiquitin ligase complexes. This chain is E3 ubiquitin-protein ligase arih1 (arih1), found in Xenopus laevis (African clawed frog).